Reading from the N-terminus, the 238-residue chain is 7-cyano-7-deazaguanine synthase (238 aa).

Residue F14–L24 participates in ATP binding. C202, C217, C220, and C223 together coordinate Zn(2+).

The protein belongs to the QueC family. Zn(2+) serves as cofactor.

The enzyme catalyses 7-carboxy-7-deazaguanine + NH4(+) + ATP = 7-cyano-7-deazaguanine + ADP + phosphate + H2O + H(+). The protein operates within purine metabolism; 7-cyano-7-deazaguanine biosynthesis. Its function is as follows. Catalyzes the ATP-dependent conversion of 7-carboxy-7-deazaguanine (CDG) to 7-cyano-7-deazaguanine (preQ(0)). In Nitrobacter hamburgensis (strain DSM 10229 / NCIMB 13809 / X14), this protein is 7-cyano-7-deazaguanine synthase.